The following is a 336-amino-acid chain: GTPase Obg (336 aa).

An Obg domain is found at 1 to 159; that stretch reads MKFLDETKVY…KTIWLRLKLI (159 aa). One can recognise an OBG-type G domain in the interval 160–327; the sequence is ADAGLVGLPN…ALRALRSVIA (168 aa). GTP-binding positions include 166–173, 191–195, 212–215, 279–282, and 308–310; these read GLPNAGKS, FTTLH, DIPG, SQID, and SAV. The Mg(2+) site is built by Ser173 and Thr193.

It belongs to the TRAFAC class OBG-HflX-like GTPase superfamily. OBG GTPase family. In terms of assembly, monomer. Mg(2+) serves as cofactor.

The protein localises to the cytoplasm. An essential GTPase which binds GTP, GDP and possibly (p)ppGpp with moderate affinity, with high nucleotide exchange rates and a fairly low GTP hydrolysis rate. Plays a role in control of the cell cycle, stress response, ribosome biogenesis and in those bacteria that undergo differentiation, in morphogenesis control. The polypeptide is GTPase Obg (Rhizobium meliloti (strain 1021) (Ensifer meliloti)).